Here is a 417-residue protein sequence, read N- to C-terminus: Serine hydroxymethyltransferase (417 aa).

(6S)-5,6,7,8-tetrahydrofolate is bound by residues L121 and 125–127; that span reads GHL. At K229 the chain carries N6-(pyridoxal phosphate)lysine. Position 355–357 (355–357) interacts with (6S)-5,6,7,8-tetrahydrofolate; the sequence is SPF.

Belongs to the SHMT family. As to quaternary structure, homodimer. Requires pyridoxal 5'-phosphate as cofactor.

Its subcellular location is the cytoplasm. The enzyme catalyses (6R)-5,10-methylene-5,6,7,8-tetrahydrofolate + glycine + H2O = (6S)-5,6,7,8-tetrahydrofolate + L-serine. The protein operates within one-carbon metabolism; tetrahydrofolate interconversion. Its pathway is amino-acid biosynthesis; glycine biosynthesis; glycine from L-serine: step 1/1. Its function is as follows. Catalyzes the reversible interconversion of serine and glycine with tetrahydrofolate (THF) serving as the one-carbon carrier. This reaction serves as the major source of one-carbon groups required for the biosynthesis of purines, thymidylate, methionine, and other important biomolecules. Also exhibits THF-independent aldolase activity toward beta-hydroxyamino acids, producing glycine and aldehydes, via a retro-aldol mechanism. This chain is Serine hydroxymethyltransferase, found in Shewanella sp. (strain W3-18-1).